The chain runs to 360 residues: Chorismate synthase (360 aa).

Residues R48 and R54 each contribute to the NADP(+) site. FMN is bound by residues 125-127, 246-247, G286, 301-305, and R327; these read RSS, NA, and KPTSS.

Belongs to the chorismate synthase family. Homotetramer. FMNH2 is required as a cofactor.

It carries out the reaction 5-O-(1-carboxyvinyl)-3-phosphoshikimate = chorismate + phosphate. It participates in metabolic intermediate biosynthesis; chorismate biosynthesis; chorismate from D-erythrose 4-phosphate and phosphoenolpyruvate: step 7/7. In terms of biological role, catalyzes the anti-1,4-elimination of the C-3 phosphate and the C-6 proR hydrogen from 5-enolpyruvylshikimate-3-phosphate (EPSP) to yield chorismate, which is the branch point compound that serves as the starting substrate for the three terminal pathways of aromatic amino acid biosynthesis. This reaction introduces a second double bond into the aromatic ring system. In Haemophilus ducreyi (strain 35000HP / ATCC 700724), this protein is Chorismate synthase.